A 1181-amino-acid chain; its full sequence is HEAT repeat-containing protein 6 (1181 aa).

Residues 159-198 form an HEAT 1 repeat; sequence LELLGETGLLMKLSDLAQSDPEVRRAAVHCMANLCLSVPG. 2 disordered regions span residues 294–347 and 371–407; these read DGRT…PVTG and LDGS…AEGG. The span at 300 to 312 shows a compositional bias: polar residues; that stretch reads KPQQSESSASRPT. The span at 313–325 shows a compositional bias: basic residues; the sequence is LNKKKKSKVKPKK. Phosphoserine occurs at positions 336, 337, 399, and 402. Residues 383–399 are compositionally biased toward low complexity; it reads SSPFSSSSWKRVSSSES. HEAT repeat units follow at residues 452-490, 514-552, and 558-595; these read ELGS…GSKQ, SSIR…DAPY, and SLLT…THAP. Residues 613–648 form a disordered region; it reads NSNSATPHLSPPDWWKKAPAGPSLEETSVSSPKGSS. A Phosphothreonine modification is found at Thr618. Positions 637–646 are enriched in polar residues; the sequence is EETSVSSPKG. The residue at position 643 (Ser643) is a Phosphoserine.

In Pongo abelii (Sumatran orangutan), this protein is HEAT repeat-containing protein 6 (HEATR6).